Here is a 29-residue protein sequence, read N- to C-terminus: Cyclotide mden-F (29 aa).

A cross-link (cyclopeptide (Gly-Asn)) is located at residues 1-29 (GLPICGETCFFGKCNTPKCTCINPICYKN). Intrachain disulfides connect C5–C19, C9–C21, and C14–C26.

This sequence belongs to the cyclotide family. Post-translationally, this is a cyclic peptide.

In terms of biological role, probably participates in a plant defense mechanism. This chain is Cyclotide mden-F, found in Melicytus dentatus (Tree violet).